The chain runs to 112 residues: MKQAIVARADLRMGKGKLAAQVAHASLSAVEDTGTRSEKQWKGGGQKKIVLKANSEKKLFQLADEAERDGIPHAVVRDAGHTQLEPGTVTCIAIGPDSDENIDRITGSLSLY.

This sequence belongs to the PTH2 family.

It localises to the cytoplasm. It catalyses the reaction an N-acyl-L-alpha-aminoacyl-tRNA + H2O = an N-acyl-L-amino acid + a tRNA + H(+). The natural substrate for this enzyme may be peptidyl-tRNAs which drop off the ribosome during protein synthesis. The chain is Peptidyl-tRNA hydrolase from Haloquadratum walsbyi (strain DSM 16790 / HBSQ001).